Consider the following 200-residue polypeptide: ATP-dependent Clp protease proteolytic subunit 2 (200 aa).

Residue Ser99 is the Nucleophile of the active site. Residue His123 is part of the active site.

The protein belongs to the peptidase S14 family. Fourteen ClpP subunits assemble into 2 heptameric rings which stack back to back to give a disk-like structure with a central cavity, resembling the structure of eukaryotic proteasomes.

Its subcellular location is the cytoplasm. The enzyme catalyses Hydrolysis of proteins to small peptides in the presence of ATP and magnesium. alpha-casein is the usual test substrate. In the absence of ATP, only oligopeptides shorter than five residues are hydrolyzed (such as succinyl-Leu-Tyr-|-NHMec, and Leu-Tyr-Leu-|-Tyr-Trp, in which cleavage of the -Tyr-|-Leu- and -Tyr-|-Trp bonds also occurs).. In terms of biological role, cleaves peptides in various proteins in a process that requires ATP hydrolysis. Has a chymotrypsin-like activity. Plays a major role in the degradation of misfolded proteins. In Symbiobacterium thermophilum (strain DSM 24528 / JCM 14929 / IAM 14863 / T), this protein is ATP-dependent Clp protease proteolytic subunit 2.